Consider the following 1584-residue polypeptide: Sterile alpha motif domain-containing protein 9-like (1584 aa).

One can recognise an SAM domain in the interval 14 to 79 (WTKEHVKKWV…RSYNKLNSKS (66 aa)). A disordered region spans residues 76 to 122 (NSKSPESDNHDPGQLDNSKPSKTEHQKNPKHTKKEEENSMSSNIDYD). Residues 80-112 (PESDNHDPGQLDNSKPSKTEHQKNPKHTKKEEE) show a composition bias toward basic and acidic residues.

Interacts with EEA1. As to expression, widely expressed in adult and fetal tissues. Expressed in the cerebellum. Variable expression in tumors. Down-regulated in breast cancer.

The protein localises to the early endosome. It localises to the mitochondrion. Functionally, may be involved in endosome fusion. Mediates down-regulation of growth factor signaling via internalization of growth factor receptors. This is Sterile alpha motif domain-containing protein 9-like (SAMD9L) from Homo sapiens (Human).